The chain runs to 213 residues: MFTVIVNLKNYAEANGKNFVEFVSKLPKYDSVRLIIAPAILDLHNAHEFRNVEFFSQHVDDVGYGPYTGHIAIESLMNYGIIGSLLNHSERRLGEDKIISTVKKAQMLGFEIALCVESMEEAKRYSALKPSFIAYEPKELIGGNVSVSTAKPEIISEIVDICGTEGVPVLVGAGIKNRQDVRKSLDLGAQGILVSSGVVKSPDPVRSLNSLIK.

7-9 (NLK) provides a ligand contact to substrate. Histidine 88 acts as the Electrophile in catalysis. Glutamate 136 (proton acceptor) is an active-site residue. The substrate site is built by isoleucine 141 and glycine 174.

This sequence belongs to the triosephosphate isomerase family. As to quaternary structure, homotetramer; dimer of dimers.

Its subcellular location is the cytoplasm. It catalyses the reaction D-glyceraldehyde 3-phosphate = dihydroxyacetone phosphate. It functions in the pathway carbohydrate biosynthesis; gluconeogenesis. The protein operates within carbohydrate degradation; glycolysis; D-glyceraldehyde 3-phosphate from glycerone phosphate: step 1/1. In terms of biological role, involved in the gluconeogenesis. Catalyzes stereospecifically the conversion of dihydroxyacetone phosphate (DHAP) to D-glyceraldehyde-3-phosphate (G3P). The chain is Triosephosphate isomerase from Thermoplasma volcanium (strain ATCC 51530 / DSM 4299 / JCM 9571 / NBRC 15438 / GSS1).